The sequence spans 184 residues: Putative NAD(P)H nitroreductase HI_1542 (184 aa).

FMN-binding positions include 10–12, R35, and H39; that span reads RKS. 122–127 contributes to the NAD(+) binding site; sequence AAQAQG. 132–134 serves as a coordination point for FMN; the sequence is WIS.

This sequence belongs to the nitroreductase family. Homodimer. FMN is required as a cofactor.

The sequence is that of Putative NAD(P)H nitroreductase HI_1542 from Haemophilus influenzae (strain ATCC 51907 / DSM 11121 / KW20 / Rd).